The sequence spans 101 residues: Urease subunit beta (101 aa).

Belongs to the urease beta subunit family. In terms of assembly, heterotrimer of UreA (gamma), UreB (beta) and UreC (alpha) subunits. Three heterotrimers associate to form the active enzyme.

It localises to the cytoplasm. It catalyses the reaction urea + 2 H2O + H(+) = hydrogencarbonate + 2 NH4(+). It participates in nitrogen metabolism; urea degradation; CO(2) and NH(3) from urea (urease route): step 1/1. This Chelativorans sp. (strain BNC1) protein is Urease subunit beta.